The primary structure comprises 156 residues: Cyclic pyranopterin monophosphate synthase (156 aa).

Residues 73 to 75 (LCH) and 110 to 111 (ME) contribute to the substrate site. Residue aspartate 125 is part of the active site.

It belongs to the MoaC family. Homohexamer; trimer of dimers.

It catalyses the reaction (8S)-3',8-cyclo-7,8-dihydroguanosine 5'-triphosphate = cyclic pyranopterin phosphate + diphosphate. It functions in the pathway cofactor biosynthesis; molybdopterin biosynthesis. Functionally, catalyzes the conversion of (8S)-3',8-cyclo-7,8-dihydroguanosine 5'-triphosphate to cyclic pyranopterin monophosphate (cPMP). This is Cyclic pyranopterin monophosphate synthase from Stutzerimonas stutzeri (strain A1501) (Pseudomonas stutzeri).